The primary structure comprises 148 residues: Calcium-permeable cation-selective channel WeiTsing (148 aa).

Over methionine 1–serine 25 the chain is Cytoplasmic. A helical transmembrane segment spans residues alanine 26–valine 46. Over serine 47–serine 51 the chain is Lumenal. A helical transmembrane segment spans residues valine 52–valine 72. The Cytoplasmic segment spans residues leucine 73 to arginine 90. The chain crosses the membrane as a helical span at residues leucine 91–valine 110. The Lumenal portion of the chain corresponds to valine 111–serine 116. The chain crosses the membrane as a helical span at residues isoleucine 117 to leucine 133. The Cytoplasmic portion of the chain corresponds to glutamate 134 to valine 148.

Forms pentamers with a central pore to produce an ion channel.

It is found in the endoplasmic reticulum membrane. The enzyme catalyses Ca(2+)(in) = Ca(2+)(out). The catalysed reaction is Na(+)(in) = Na(+)(out). Functionally, calcium-permeable cation-selective channel conferring a broad-spectrum clubroot resistance by supporting cytosolic Ca(2+) increase in root pericycle cells. Triggers immunity toward fungal pathogens such as Plasmodiophora brassicae (Pb) and induces defenses. Also permeable to sodium ion Na(+) and possibly other cations. The polypeptide is Calcium-permeable cation-selective channel WeiTsing (Arabidopsis thaliana (Mouse-ear cress)).